The primary structure comprises 629 residues: Aspartate--tRNA(Asp/Asn) ligase (629 aa).

The segment at 1–24 (MERSSRADLISEDSHPARTHTCGD) is disordered. The segment covering 12–24 (EDSHPARTHTCGD) has biased composition (basic and acidic residues). Residue glutamate 194 participates in L-aspartate binding. Residues 218 to 221 (QTYK) form an aspartate region. Residue arginine 240 participates in L-aspartate binding. ATP contacts are provided by residues 240-242 (RDE) and glutamine 249. Histidine 474 is an L-aspartate binding site. Glutamate 508 lines the ATP pocket. Arginine 515 is a binding site for L-aspartate. An ATP-binding site is contributed by 560 to 563 (GLDR).

The protein belongs to the class-II aminoacyl-tRNA synthetase family. Type 1 subfamily. Homodimer.

The protein localises to the cytoplasm. It catalyses the reaction tRNA(Asx) + L-aspartate + ATP = L-aspartyl-tRNA(Asx) + AMP + diphosphate. Functionally, aspartyl-tRNA synthetase with relaxed tRNA specificity since it is able to aspartylate not only its cognate tRNA(Asp) but also tRNA(Asn). Reaction proceeds in two steps: L-aspartate is first activated by ATP to form Asp-AMP and then transferred to the acceptor end of tRNA(Asp/Asn). This is Aspartate--tRNA(Asp/Asn) ligase from Salinibacter ruber (strain DSM 13855 / M31).